A 463-amino-acid chain; its full sequence is GTPase Der (463 aa).

EngA-type G domains lie at proline 27–glycine 190 and arginine 200–aspartate 373. Residues glycine 33–serine 40, aspartate 80–tryptophan 84, asparagine 142–aspartate 145, glycine 206–serine 213, aspartate 253–leucine 257, and asparagine 318–aspartate 321 contribute to the GTP site. The KH-like domain occupies threonine 374 to glutamate 456.

Belongs to the TRAFAC class TrmE-Era-EngA-EngB-Septin-like GTPase superfamily. EngA (Der) GTPase family. In terms of assembly, associates with the 50S ribosomal subunit.

GTPase that plays an essential role in the late steps of ribosome biogenesis. This chain is GTPase Der, found in Mycobacterium bovis (strain ATCC BAA-935 / AF2122/97).